The sequence spans 386 residues: Heat-inducible transcription repressor HrcA (386 aa).

The protein belongs to the HrcA family.

Its function is as follows. Negative regulator of class I heat shock genes (grpE-dnaK-dnaJ and groELS operons). Prevents heat-shock induction of these operons. The sequence is that of Heat-inducible transcription repressor HrcA from Chlamydia caviae (strain ATCC VR-813 / DSM 19441 / 03DC25 / GPIC) (Chlamydophila caviae).